We begin with the raw amino-acid sequence, 179 residues long: Nicotinamide-nucleotide adenylyltransferase (179 aa).

It belongs to the archaeal NMN adenylyltransferase family.

It localises to the cytoplasm. The enzyme catalyses beta-nicotinamide D-ribonucleotide + ATP + H(+) = diphosphate + NAD(+). It functions in the pathway cofactor biosynthesis; NAD(+) biosynthesis; NAD(+) from nicotinamide D-ribonucleotide: step 1/1. This is Nicotinamide-nucleotide adenylyltransferase from Thermoplasma acidophilum (strain ATCC 25905 / DSM 1728 / JCM 9062 / NBRC 15155 / AMRC-C165).